The sequence spans 233 residues: Ribosome-recycling factor, mitochondrial (233 aa).

It belongs to the RRF family.

The protein resides in the mitochondrion. Its function is as follows. Necessary for protein synthesis in mitochondria. Functions as a ribosome recycling factor in mitochondria. The sequence is that of Ribosome-recycling factor, mitochondrial (RRF1) from Candida glabrata (strain ATCC 2001 / BCRC 20586 / JCM 3761 / NBRC 0622 / NRRL Y-65 / CBS 138) (Yeast).